Here is a 93-residue protein sequence, read N- to C-terminus: Small ribosomal subunit protein uS19 (93 aa).

Positions 74 to 93 (FSPTRTFRGHVKDDRKSKRR) are disordered. The span at 83 to 93 (HVKDDRKSKRR) shows a compositional bias: basic and acidic residues.

Belongs to the universal ribosomal protein uS19 family.

Functionally, protein S19 forms a complex with S13 that binds strongly to the 16S ribosomal RNA. The protein is Small ribosomal subunit protein uS19 of Streptomyces griseus subsp. griseus (strain JCM 4626 / CBS 651.72 / NBRC 13350 / KCC S-0626 / ISP 5235).